The sequence spans 362 residues: Cobalt-precorrin-5B C(1)-methyltransferase (362 aa).

The protein belongs to the CbiD family.

It catalyses the reaction Co-precorrin-5B + S-adenosyl-L-methionine = Co-precorrin-6A + S-adenosyl-L-homocysteine. It functions in the pathway cofactor biosynthesis; adenosylcobalamin biosynthesis; cob(II)yrinate a,c-diamide from sirohydrochlorin (anaerobic route): step 6/10. Catalyzes the methylation of C-1 in cobalt-precorrin-5B to form cobalt-precorrin-6A. The sequence is that of Cobalt-precorrin-5B C(1)-methyltransferase from Burkholderia cenocepacia (strain HI2424).